Here is a 160-residue protein sequence, read N- to C-terminus: Transcriptional repressor NrdR (160 aa).

The segment at 3-34 (CPACNYNGTKVLDSRPVQDFGSIRRRRECESC) is a zinc-finger region. In terms of domain architecture, ATP-cone spans 49–139 (LIIVKKDGTR…VYKQFKDINV (91 aa)).

Belongs to the NrdR family. The cofactor is Zn(2+).

Negatively regulates transcription of bacterial ribonucleotide reductase nrd genes and operons by binding to NrdR-boxes. The polypeptide is Transcriptional repressor NrdR (Exiguobacterium sibiricum (strain DSM 17290 / CCUG 55495 / CIP 109462 / JCM 13490 / 255-15)).